Here is a 375-residue protein sequence, read N- to C-terminus: 23S rRNA (uracil(747)-C(5))-methyltransferase RlmC (375 aa).

[4Fe-4S] cluster is bound by residues cysteine 3, cysteine 11, cysteine 14, and cysteine 87. Residues glutamine 212, phenylalanine 241, glutamate 262, and asparagine 307 each coordinate S-adenosyl-L-methionine. Catalysis depends on cysteine 334, which acts as the Nucleophile.

Belongs to the class I-like SAM-binding methyltransferase superfamily. RNA M5U methyltransferase family. RlmC subfamily.

It catalyses the reaction uridine(747) in 23S rRNA + S-adenosyl-L-methionine = 5-methyluridine(747) in 23S rRNA + S-adenosyl-L-homocysteine + H(+). Functionally, catalyzes the formation of 5-methyl-uridine at position 747 (m5U747) in 23S rRNA. The sequence is that of 23S rRNA (uracil(747)-C(5))-methyltransferase RlmC from Pectobacterium atrosepticum (strain SCRI 1043 / ATCC BAA-672) (Erwinia carotovora subsp. atroseptica).